Here is a 166-residue protein sequence, read N- to C-terminus: 3-dehydroquinate dehydratase (166 aa).

The active-site Proton acceptor is the Tyr-22. The substrate site is built by Asn-73, His-79, and Asp-86. His-99 (proton donor) is an active-site residue. Residues 100–101 (IT) and Arg-110 contribute to the substrate site.

The protein belongs to the type-II 3-dehydroquinase family. As to quaternary structure, homododecamer.

The catalysed reaction is 3-dehydroquinate = 3-dehydroshikimate + H2O. The protein operates within metabolic intermediate biosynthesis; chorismate biosynthesis; chorismate from D-erythrose 4-phosphate and phosphoenolpyruvate: step 3/7. Catalyzes a trans-dehydration via an enolate intermediate. The chain is 3-dehydroquinate dehydratase from Wolinella succinogenes (strain ATCC 29543 / DSM 1740 / CCUG 13145 / JCM 31913 / LMG 7466 / NCTC 11488 / FDC 602W) (Vibrio succinogenes).